Consider the following 799-residue polypeptide: Lon protease (799 aa).

Residues 7–200 (LPVLPLRDIV…KVFALMEGEI (194 aa)) form the Lon N-terminal domain. Residue 352–359 (GPPGVGKT) participates in ATP binding. A Lon proteolytic domain is found at 587–768 (VDQVGIVTGL…DEVLKHALTG (182 aa)). Residues Ser-674 and Lys-717 contribute to the active site. The interval 772–799 (PVEWNEAEEPITTSAKKDDGDSDAMLTH) is disordered.

Belongs to the peptidase S16 family. As to quaternary structure, homohexamer. Organized in a ring with a central cavity.

The protein localises to the cytoplasm. It catalyses the reaction Hydrolysis of proteins in presence of ATP.. In terms of biological role, ATP-dependent serine protease that mediates the selective degradation of mutant and abnormal proteins as well as certain short-lived regulatory proteins. Required for cellular homeostasis and for survival from DNA damage and developmental changes induced by stress. Degrades polypeptides processively to yield small peptide fragments that are 5 to 10 amino acids long. Binds to DNA in a double-stranded, site-specific manner. CcrM is an important target of the Lon protease pathway in C.crescentus. The chain is Lon protease from Caulobacter vibrioides (strain ATCC 19089 / CIP 103742 / CB 15) (Caulobacter crescentus).